Here is a 293-residue protein sequence, read N- to C-terminus: uncharacterized protein (293 aa).

Aspartate 119 is a catalytic residue.

It belongs to the pseudouridine synthase RluA family.

The enzyme catalyses a uridine in RNA = a pseudouridine in RNA. This is an uncharacterized protein from Helicobacter pylori (strain J99 / ATCC 700824) (Campylobacter pylori J99).